Reading from the N-terminus, the 344-residue chain is Alkyl hydroperoxide reductase Rv2159c (344 aa).

Residues 49-50 (AG) form an important for interaction with PknI region. Cys-84 (cysteine sulfenic acid (-SOH) intermediate) is an active-site residue.

The protein belongs to the AhpD family. In terms of assembly, interacts with the serine/threonine-protein kinase PknI. The PknI-Rv2159c interaction is mediated through phosphorylation independent physical interaction.

Interaction with PknI increases the peroxidase activity by several folds. Functionally, involved in protection against oxidative stresses. May play a significant role in maintaining the cellular homeostasis during stress and virulence of M.tuberculosis. In vitro, catalyzes the decomposition of cumene hydroperoxide (CHP) to acetophenone. The sequence is that of Alkyl hydroperoxide reductase Rv2159c from Mycobacterium tuberculosis (strain ATCC 25618 / H37Rv).